We begin with the raw amino-acid sequence, 385 residues long: A-type ATP synthase subunit C (385 aa).

The protein belongs to the V-ATPase V0D/AC39 subunit family. As to quaternary structure, has multiple subunits with at least A(3), B(3), C, D, E, F, H, I and proteolipid K(x).

It is found in the cell membrane. In terms of biological role, component of the A-type ATP synthase that produces ATP from ADP in the presence of a proton gradient across the membrane. The polypeptide is A-type ATP synthase subunit C (Methanothermobacter thermautotrophicus (strain ATCC 29096 / DSM 1053 / JCM 10044 / NBRC 100330 / Delta H) (Methanobacterium thermoautotrophicum)).